The chain runs to 297 residues: Urease accessory protein UreD (297 aa).

It belongs to the UreD family. UreD, UreF and UreG form a complex that acts as a GTP-hydrolysis-dependent molecular chaperone, activating the urease apoprotein by helping to assemble the nickel containing metallocenter of UreC. The UreE protein probably delivers the nickel.

It is found in the cytoplasm. Required for maturation of urease via the functional incorporation of the urease nickel metallocenter. In Anaeromyxobacter sp. (strain Fw109-5), this protein is Urease accessory protein UreD.